Here is a 136-residue protein sequence, read N- to C-terminus: Large ribosomal subunit protein uL16 (136 aa).

It belongs to the universal ribosomal protein uL16 family. Part of the 50S ribosomal subunit.

Its function is as follows. Binds 23S rRNA and is also seen to make contacts with the A and possibly P site tRNAs. The sequence is that of Large ribosomal subunit protein uL16 from Buchnera aphidicola subsp. Baizongia pistaciae (strain Bp).